Here is a 435-residue protein sequence, read N- to C-terminus: NADH-quinone oxidoreductase subunit D (435 aa).

Belongs to the complex I 49 kDa subunit family. NDH-1 is composed of 14 different subunits. Subunits NuoB, C, D, E, F, and G constitute the peripheral sector of the complex.

It localises to the cell inner membrane. It catalyses the reaction a quinone + NADH + 5 H(+)(in) = a quinol + NAD(+) + 4 H(+)(out). Functionally, NDH-1 shuttles electrons from NADH, via FMN and iron-sulfur (Fe-S) centers, to quinones in the respiratory chain. The immediate electron acceptor for the enzyme in this species is believed to be ubiquinone. Couples the redox reaction to proton translocation (for every two electrons transferred, four hydrogen ions are translocated across the cytoplasmic membrane), and thus conserves the redox energy in a proton gradient. In Xylella fastidiosa (strain 9a5c), this protein is NADH-quinone oxidoreductase subunit D.